The following is a 150-amino-acid chain: 1,4-dihydroxy-2-naphthoyl-CoA hydrolase (150 aa).

Residue Asp-19 is part of the active site.

This sequence belongs to the 4-hydroxybenzoyl-CoA thioesterase family. DHNA-CoA hydrolase subfamily.

It carries out the reaction 1,4-dihydroxy-2-naphthoyl-CoA + H2O = 1,4-dihydroxy-2-naphthoate + CoA + H(+). The protein operates within cofactor biosynthesis; phylloquinone biosynthesis. It participates in quinol/quinone metabolism; 1,4-dihydroxy-2-naphthoate biosynthesis; 1,4-dihydroxy-2-naphthoate from chorismate: step 7/7. Its function is as follows. Catalyzes the hydrolysis of 1,4-dihydroxy-2-naphthoyl-CoA (DHNA-CoA) to 1,4-dihydroxy-2-naphthoate (DHNA), a reaction involved in phylloquinone (vitamin K1) biosynthesis. This chain is 1,4-dihydroxy-2-naphthoyl-CoA hydrolase, found in Prochlorococcus marinus (strain MIT 9215).